A 780-amino-acid polypeptide reads, in one-letter code: ATP-dependent 6-phosphofructokinase, muscle type (780 aa).

Threonine 2 carries the N-acetylthreonine modification. Positions 2-390 (THEEHHAAKS…NWEVYKLLAH (389 aa)) are N-terminal catalytic PFK domain 1. ATP is bound by residues glycine 25, 88 to 89 (RC), and 118 to 121 (GDGS). Aspartate 119 contributes to the Mg(2+) binding site. Residues 164 to 166 (SID), arginine 201, 208 to 210 (MGR), glutamate 264, arginine 292, and 298 to 301 (HVQR) each bind substrate. Aspartate 166 (proton acceptor) is an active-site residue. Serine 377 carries the phosphoserine modification. The interdomain linker stretch occupies residues 391–401 (VRPPVTKSGSY). The C-terminal regulatory PFK domain 2 stretch occupies residues 402-780 (TVAVMNVGAP…TRKRSGEATI (379 aa)). Beta-D-fructose 2,6-bisphosphate-binding positions include arginine 471 and 528–532 (TVSNN). Serine 530 is a glycosylation site (O-linked (GlcNAc) serine). Residue lysine 557 is modified to N6-(2-hydroxyisobutyryl)lysine. Beta-D-fructose 2,6-bisphosphate is bound by residues arginine 566, 573–575 (MGG), glutamate 629, arginine 655, and 661–664 (HMQQ). Serine 667 is subject to Phosphoserine. Arginine 735 provides a ligand contact to beta-D-fructose 2,6-bisphosphate. Serine 775 is modified (phosphoserine).

Belongs to the phosphofructokinase type A (PFKA) family. ATP-dependent PFK group I subfamily. Eukaryotic two domain clade 'E' sub-subfamily. In terms of assembly, homo- and heterotetramers. Phosphofructokinase (PFK) enzyme functions as a tetramer composed of different combinations of 3 types of subunits, called PFKM (M), PFKL (L) and PFKP (P). The composition of the PFK tetramer differs according to the tissue type it is present in. The kinetic and regulatory properties of the tetrameric enzyme are dependent on the subunit composition, hence can vary across tissues. Interacts (via C-terminus) with HK1 (via N-terminal spermatogenic cell-specific region). The cofactor is Mg(2+). In terms of processing, glcNAcylation decreases enzyme activity.

The protein localises to the cytoplasm. The enzyme catalyses beta-D-fructose 6-phosphate + ATP = beta-D-fructose 1,6-bisphosphate + ADP + H(+). The protein operates within carbohydrate degradation; glycolysis; D-glyceraldehyde 3-phosphate and glycerone phosphate from D-glucose: step 3/4. Allosterically activated by ADP, AMP, or fructose 2,6-bisphosphate, and allosterically inhibited by ATP or citrate. Catalyzes the phosphorylation of D-fructose 6-phosphate to fructose 1,6-bisphosphate by ATP, the first committing step of glycolysis. In Sus scrofa (Pig), this protein is ATP-dependent 6-phosphofructokinase, muscle type (PFKM).